We begin with the raw amino-acid sequence, 121 residues long: Large ribosomal subunit protein uL18 (121 aa).

The protein belongs to the universal ribosomal protein uL18 family. In terms of assembly, part of the 50S ribosomal subunit; part of the 5S rRNA/L5/L18/L25 subcomplex. Contacts the 5S and 23S rRNAs.

In terms of biological role, this is one of the proteins that bind and probably mediate the attachment of the 5S RNA into the large ribosomal subunit, where it forms part of the central protuberance. This is Large ribosomal subunit protein uL18 from Burkholderia mallei (strain NCTC 10247).